The following is a 399-amino-acid chain: Accessory Sec system protein translocase subunit SecY2 (399 aa).

The next 10 membrane-spanning stretches (helical) occupy residues Ile14–Gly34, Leu60–Leu80, Ile102–Asn122, Ser128–Ala148, Ile152–Phe172, Val184–Ile204, Ile238–Ala258, Phe272–Leu292, Trp335–Val355, and Ile362–Ile382.

Belongs to the SecY/SEC61-alpha family. SecY2 subfamily. In terms of assembly, component of the accessory SecA2/SecY2 protein translocase complex required to export cell wall proteins. May form heterotrimers with SecE and SecG subunits.

It localises to the cell membrane. Part of the accessory SecA2/SecY2 system specifically required for export of possible cell wall proteins. The central subunit of a protein translocation channel. The chain is Accessory Sec system protein translocase subunit SecY2 from Staphylococcus haemolyticus (strain JCSC1435).